A 557-amino-acid chain; its full sequence is Formate--tetrahydrofolate ligase 2 (557 aa).

Thr-66–Thr-73 serves as a coordination point for ATP.

This sequence belongs to the formate--tetrahydrofolate ligase family.

It catalyses the reaction (6S)-5,6,7,8-tetrahydrofolate + formate + ATP = (6R)-10-formyltetrahydrofolate + ADP + phosphate. The protein operates within one-carbon metabolism; tetrahydrofolate interconversion. The protein is Formate--tetrahydrofolate ligase 2 of Streptococcus pyogenes serotype M18 (strain MGAS8232).